A 298-amino-acid chain; its full sequence is HTH-type transcriptional regulator ArgP (298 aa).

One can recognise an HTH lysR-type domain in the interval 4–60; that stretch reads LDYRWIEALDSVVSKGSFERAAEQLFISQSAVSQRIKQLEKYLAQPVLIREQPPRPT. The H-T-H motif DNA-binding region spans 21-40; that stretch reads FERAAEQLFISQSAVSQRIK.

This sequence belongs to the LysR transcriptional regulatory family. As to quaternary structure, homodimer.

Controls the transcription of genes involved in arginine and lysine metabolism. This chain is HTH-type transcriptional regulator ArgP, found in Vibrio cholerae serotype O1 (strain ATCC 39315 / El Tor Inaba N16961).